The sequence spans 429 residues: Alpha-galactosidase A (429 aa).

The signal sequence occupies residues 1 to 31 (MQLRNPELHLGCALALRFLALVSWDIPGARA). 2 disulfide bridges follow: cysteine 52–cysteine 94 and cysteine 56–cysteine 63. An N-linked (GlcNAc...) asparagine glycan is attached at asparagine 139. A disulfide bridge connects residues cysteine 142 and cysteine 172. The Nucleophile role is filled by aspartate 170. N-linked (GlcNAc...) asparagine glycosylation occurs at asparagine 192. Cysteine 202 and cysteine 223 are oxidised to a cystine. A substrate-binding site is contributed by 203–207 (EWPLY). Asparagine 215 is a glycosylation site (N-linked (GlcNAc...) asparagine). Catalysis depends on aspartate 231, which acts as the Proton donor. A disulfide bridge connects residues cysteine 378 and cysteine 382.

This sequence belongs to the glycosyl hydrolase 27 family. In terms of assembly, homodimer.

The protein resides in the lysosome. It catalyses the reaction Hydrolysis of terminal, non-reducing alpha-D-galactose residues in alpha-D-galactosides, including galactose oligosaccharides, galactomannans and galactolipids.. The enzyme catalyses a globoside Gb3Cer (d18:1(4E)) + H2O = a beta-D-Gal-(1-&gt;4)-beta-D-Glc-(1&lt;-&gt;1)-Cer(d18:1(4E)) + D-galactose. It carries out the reaction a globoside Gb3Cer + H2O = a beta-D-galactosyl-(1-&gt;4)-beta-D-glucosyl-(1&lt;-&gt;1)-ceramide + D-galactose. Galactosylgalactosylglucosylceramidase activity is stimulated by saposin B and ammonium chloride. Functionally, catalyzes the hydrolysis of glycosphingolipids and participates in their degradation in the lysosome. In Homo sapiens (Human), this protein is Alpha-galactosidase A.